A 230-amino-acid chain; its full sequence is Probable nicotinate-nucleotide adenylyltransferase (230 aa).

This sequence belongs to the NadD family.

The enzyme catalyses nicotinate beta-D-ribonucleotide + ATP + H(+) = deamido-NAD(+) + diphosphate. The protein operates within cofactor biosynthesis; NAD(+) biosynthesis; deamido-NAD(+) from nicotinate D-ribonucleotide: step 1/1. Catalyzes the reversible adenylation of nicotinate mononucleotide (NaMN) to nicotinic acid adenine dinucleotide (NaAD). The protein is Probable nicotinate-nucleotide adenylyltransferase of Pseudomonas putida (strain ATCC 47054 / DSM 6125 / CFBP 8728 / NCIMB 11950 / KT2440).